Here is a 368-residue protein sequence, read N- to C-terminus: Transcription factor bHLH30 (368 aa).

A coiled-coil region spans residues 3 to 30 (AKKEEEEEEEEDSSEAMNNIQNYQNDLF). The bHLH domain occupies 173–222 (AASKSHSEAERRRRERINNHLAKLRSILPNTTKTDKASLLAEVIQHVKEL). The interval 333–368 (KSNVEESSSSGNAKRQRMSSHNTITIVEQQQQYNQR) is disordered. Positions 337-368 (EESSSSGNAKRQRMSSHNTITIVEQQQQYNQR) are enriched in polar residues.

In terms of assembly, homodimer. Interacts with LHW.

Its subcellular location is the nucleus. The protein is Transcription factor bHLH30 (BHLH30) of Arabidopsis thaliana (Mouse-ear cress).